We begin with the raw amino-acid sequence, 442 residues long: Chromosomal replication initiator protein DnaA (442 aa).

Residues 1–84 (MSVLWSHCIS…LEIGSRAAEA (84 aa)) are domain I, interacts with DnaA modulators. Residues 84-105 (AAQMRSANPPRKTAPARKQVPN) are domain II. The domain III, AAA+ region stretch occupies residues 106 to 322 (NLNSAFIFGN…GALRRVIANA (217 aa)). Residues G150, G152, K153, and T154 each coordinate ATP. Residues 323-442 (QFTGRPITLE…FSNLLRILSN (120 aa)) form a domain IV, binds dsDNA region.

Belongs to the DnaA family. As to quaternary structure, oligomerizes as a right-handed, spiral filament on DNA at oriC.

It is found in the cytoplasm. Functionally, plays an essential role in the initiation and regulation of chromosomal replication. ATP-DnaA binds to the origin of replication (oriC) to initiate formation of the DNA replication initiation complex once per cell cycle. Binds the DnaA box (a 9 base pair repeat at the origin) and separates the double-stranded (ds)DNA. Forms a right-handed helical filament on oriC DNA; dsDNA binds to the exterior of the filament while single-stranded (ss)DNA is stabiized in the filament's interior. The ATP-DnaA-oriC complex binds and stabilizes one strand of the AT-rich DNA unwinding element (DUE), permitting loading of DNA polymerase. After initiation quickly degrades to an ADP-DnaA complex that is not apt for DNA replication. Binds acidic phospholipids. The protein is Chromosomal replication initiator protein DnaA of Methylococcus capsulatus (strain ATCC 33009 / NCIMB 11132 / Bath).